A 362-amino-acid polypeptide reads, in one-letter code: Endopolygalacturonase II (362 aa).

An N-terminal signal peptide occupies residues 1 to 21 (MHSFASLLAYGLAASATLASA). Residues 22–27 (SPIEAR) constitute a propeptide that is removed on maturation. Cysteines 30 and 45 form a disulfide. A PbH1 1 repeat occupies 156–186 (ADDITLTDITINNADGDTLGGHNTDAFDVGN). The active-site Proton donor is Asp201. Residues Cys203 and Cys219 are joined by a disulfide bond. The active site involves His223. PbH1 repeat units follow at residues 238-259 (VKNV…RIKT), 267-289 (VSEI…VIQQ), and 301-322 (TNGV…DSKA). N-linked (GlcNAc...) (high mannose) asparagine glycosylation is present at Asn240. 2 disulfide bridges follow: Cys329-Cys334 and Cys353-Cys362.

The protein belongs to the glycosyl hydrolase 28 family.

The protein localises to the secreted. It catalyses the reaction (1,4-alpha-D-galacturonosyl)n+m + H2O = (1,4-alpha-D-galacturonosyl)n + (1,4-alpha-D-galacturonosyl)m.. In terms of biological role, involved in maceration and soft-rotting of plant tissue. Hydrolyzes the 1,4-alpha glycosidic bonds of de-esterified pectate in the smooth region of the plant cell wall. This is Endopolygalacturonase II from Aspergillus niger.